The primary structure comprises 505 residues: Probable RNA exonuclease NGL3 (505 aa).

Disordered stretches follow at residues 1-75 and 334-369; these read MDSQ…FPTP and RNGEESDQDDEECDEKSRGEGHSDQPQNPKPESFTA. Residues 10-23 are compositionally biased toward polar residues; it reads SPSQKESSSTSGLV. The span at 36–54 shows a compositional bias: basic and acidic residues; it reads HRDQLSVDQIKKIREERAQ. Ser-62 is modified (phosphoserine). Residues 338-347 show a composition bias toward acidic residues; the sequence is ESDQDDEECD.

Belongs to the CCR4/nocturin family.

This chain is Probable RNA exonuclease NGL3 (NGL3), found in Saccharomyces cerevisiae (strain ATCC 204508 / S288c) (Baker's yeast).